The following is a 192-amino-acid chain: Xanthine phosphoribosyltransferase (192 aa).

2 residues coordinate xanthine: L20 and N27. 128-132 (ANGQA) contributes to the 5-phospho-alpha-D-ribose 1-diphosphate binding site. Xanthine is bound at residue K156.

It belongs to the purine/pyrimidine phosphoribosyltransferase family. Xpt subfamily. As to quaternary structure, homodimer.

Its subcellular location is the cytoplasm. It carries out the reaction XMP + diphosphate = xanthine + 5-phospho-alpha-D-ribose 1-diphosphate. Its pathway is purine metabolism; XMP biosynthesis via salvage pathway; XMP from xanthine: step 1/1. Functionally, converts the preformed base xanthine, a product of nucleic acid breakdown, to xanthosine 5'-monophosphate (XMP), so it can be reused for RNA or DNA synthesis. This Listeria monocytogenes serotype 4b (strain F2365) protein is Xanthine phosphoribosyltransferase.